Consider the following 481-residue polypeptide: UDP-glycosyltransferase 88F4 (481 aa).

Residues serine 288, 357–358, 375–383, and 397–400 each bind UDP-alpha-D-glucose; these read WA, HCGWNSVLE, and YAEQ.

The protein belongs to the UDP-glycosyltransferase family.

Functionally, glycosyltransferase that may possess chalcone and dihydrochalcone 2'-O-glucosyltransferase activity. The protein is UDP-glycosyltransferase 88F4 of Malus domestica (Apple).